The primary structure comprises 236 residues: Uridylate kinase (236 aa).

Position 10–13 (10–13) interacts with ATP; sequence KLSG. Gly-52 is a UMP binding site. Residues Gly-53 and Arg-57 each coordinate ATP. UMP-binding positions include Asp-72 and 133–140; that span reads TGNPFFTT. ATP contacts are provided by Thr-160, Tyr-166, and Asp-169.

This sequence belongs to the UMP kinase family. Homohexamer.

The protein localises to the cytoplasm. It carries out the reaction UMP + ATP = UDP + ADP. It participates in pyrimidine metabolism; CTP biosynthesis via de novo pathway; UDP from UMP (UMPK route): step 1/1. With respect to regulation, inhibited by UTP. Functionally, catalyzes the reversible phosphorylation of UMP to UDP. The polypeptide is Uridylate kinase (Cupriavidus metallidurans (strain ATCC 43123 / DSM 2839 / NBRC 102507 / CH34) (Ralstonia metallidurans)).